Reading from the N-terminus, the 430-residue chain is Glutamate-1-semialdehyde 2,1-aminomutase (430 aa).

Residue lysine 267 is modified to N6-(pyridoxal phosphate)lysine.

The protein belongs to the class-III pyridoxal-phosphate-dependent aminotransferase family. HemL subfamily. Homodimer. It depends on pyridoxal 5'-phosphate as a cofactor.

It is found in the cytoplasm. It carries out the reaction (S)-4-amino-5-oxopentanoate = 5-aminolevulinate. It functions in the pathway porphyrin-containing compound metabolism; protoporphyrin-IX biosynthesis; 5-aminolevulinate from L-glutamyl-tRNA(Glu): step 2/2. The protein is Glutamate-1-semialdehyde 2,1-aminomutase of Desulfotalea psychrophila (strain LSv54 / DSM 12343).